A 90-amino-acid chain; its full sequence is Small ribosomal subunit protein uS15 (90 aa).

Belongs to the universal ribosomal protein uS15 family. Part of the 30S ribosomal subunit. Forms a bridge to the 50S subunit in the 70S ribosome, contacting the 23S rRNA.

Its function is as follows. One of the primary rRNA binding proteins, it binds directly to 16S rRNA where it helps nucleate assembly of the platform of the 30S subunit by binding and bridging several RNA helices of the 16S rRNA. Forms an intersubunit bridge (bridge B4) with the 23S rRNA of the 50S subunit in the ribosome. The sequence is that of Small ribosomal subunit protein uS15 from Campylobacter concisus (strain 13826).